The primary structure comprises 66 residues: Conotoxin TsMEKL-03 (66 aa).

The signal sequence occupies residues 1 to 9; sequence VILLMSTQA. Residues 10–38 constitute a propeptide that is removed on maturation; it reads LIQSGVEKRSNKIKALSKRKTTAESWWEG. Disulfide bonds link cysteine 40/cysteine 54, cysteine 47/cysteine 58, and cysteine 53/cysteine 63.

It belongs to the conotoxin O2 superfamily. Expressed by the venom duct.

It is found in the secreted. The chain is Conotoxin TsMEKL-03 from Conus tessulatus (Tessellate cone).